A 218-amino-acid chain; its full sequence is MPQAPQLHDGRRIWDISPAVSPATPVWPGDTPFQHDPAWQLDEHCPVNVGRITMSPHTGAHADAPLHYAADGAPIGAVPLDAYLGPCRVIHCIGAAPRVEPQHIAHALAGTPPRVLLRTYAQAPQGKWDSAFCAVAPETISLLARHGVRLIGIDTPSLDPETSKTMDAHHAVRDHQLAILEGIVLDEVPAGDYELIALPLRLATLDASPVRAVLRELP.

Trp27 contributes to the substrate binding site. Residues His57, His61, and Asp63 each coordinate Zn(2+). His67 serves as the catalytic Proton donor/acceptor. Zn(2+) contacts are provided by His169 and Glu181.

Belongs to the Cyclase 1 superfamily. KynB family. Homodimer. The cofactor is Zn(2+).

It carries out the reaction N-formyl-L-kynurenine + H2O = L-kynurenine + formate + H(+). The protein operates within amino-acid degradation; L-tryptophan degradation via kynurenine pathway; L-kynurenine from L-tryptophan: step 2/2. With respect to regulation, inhibited by EDTA. Insensitive to phenylmethylsulfonyl fluoride (PMSF). Catalyzes the hydrolysis of N-formyl-L-kynurenine to L-kynurenine, the second step in the kynurenine pathway of tryptophan degradation. The chain is Kynurenine formamidase from Cupriavidus metallidurans (strain ATCC 43123 / DSM 2839 / NBRC 102507 / CH34) (Ralstonia metallidurans).